The chain runs to 450 residues: Phosphoglucosamine mutase (450 aa).

S101 functions as the Phosphoserine intermediate in the catalytic mechanism. Mg(2+)-binding residues include S101, D241, D243, and D245. Phosphoserine is present on S101.

It belongs to the phosphohexose mutase family. The cofactor is Mg(2+). In terms of processing, activated by phosphorylation.

The enzyme catalyses alpha-D-glucosamine 1-phosphate = D-glucosamine 6-phosphate. Catalyzes the conversion of glucosamine-6-phosphate to glucosamine-1-phosphate. This chain is Phosphoglucosamine mutase, found in Listeria monocytogenes serovar 1/2a (strain ATCC BAA-679 / EGD-e).